Consider the following 219-residue polypeptide: Small ribosomal subunit protein uS3c (219 aa).

A KH type-2 domain is found at 47–118; that stretch reads IRNHVRNSSN…KLRMTLVEVL (72 aa).

Belongs to the universal ribosomal protein uS3 family. Part of the 30S ribosomal subunit.

The protein localises to the plastid. The protein resides in the chloroplast. This chain is Small ribosomal subunit protein uS3c (rps3), found in Chara vulgaris (Common stonewort).